Consider the following 564-residue polypeptide: Eukaryotic translation initiation factor 3 subunit L (564 aa).

Ser-2 carries the N-acetylserine modification. A PCI domain is found at 331–537 (DAIRVFANIL…IHIADTKVAR (207 aa)). Residues Lys-465 and Lys-549 each carry the N6-acetyllysine modification.

This sequence belongs to the eIF-3 subunit L family. As to quaternary structure, component of the eukaryotic translation initiation factor 3 (eIF-3) complex, which is composed of 13 subunits: EIF3A, EIF3B, EIF3C, EIF3D, EIF3E, EIF3F, EIF3G, EIF3H, EIF3I, EIF3J, EIF3K, EIF3L and EIF3M. The eIF-3 complex appears to include 3 stable modules: module A is composed of EIF3A, EIF3B, EIF3G and EIF3I; module B is composed of EIF3F, EIF3H, and EIF3M; and module C is composed of EIF3C, EIF3D, EIF3E, EIF3K and EIF3L. EIF3C of module C binds EIF3B of module A and EIF3H of module B, thereby linking the three modules. EIF3J is a labile subunit that binds to the eIF-3 complex via EIF3B. The eIF-3 complex may interact with RPS6KB1 under conditions of nutrient depletion. Mitogenic stimulation may lead to binding and activation of a complex composed of MTOR and RPTOR, leading to phosphorylation and release of RPS6KB1 and binding of EIF4B to eIF-3. Interacts with RRN3.

The protein localises to the cytoplasm. In terms of biological role, component of the eukaryotic translation initiation factor 3 (eIF-3) complex, which is required for several steps in the initiation of protein synthesis. The eIF-3 complex associates with the 40S ribosome and facilitates the recruitment of eIF-1, eIF-1A, eIF-2:GTP:methionyl-tRNAi and eIF-5 to form the 43S pre-initiation complex (43S PIC). The eIF-3 complex stimulates mRNA recruitment to the 43S PIC and scanning of the mRNA for AUG recognition. The eIF-3 complex is also required for disassembly and recycling of post-termination ribosomal complexes and subsequently prevents premature joining of the 40S and 60S ribosomal subunits prior to initiation. The eIF-3 complex specifically targets and initiates translation of a subset of mRNAs involved in cell proliferation, including cell cycling, differentiation and apoptosis, and uses different modes of RNA stem-loop binding to exert either translational activation or repression. The polypeptide is Eukaryotic translation initiation factor 3 subunit L (Eif3l) (Mus musculus (Mouse)).